A 251-amino-acid chain; its full sequence is Hydroxyacylglutathione hydrolase (251 aa).

Residues histidine 53, histidine 55, aspartate 57, histidine 58, histidine 110, aspartate 127, and histidine 165 each coordinate Zn(2+).

It belongs to the metallo-beta-lactamase superfamily. Glyoxalase II family. As to quaternary structure, monomer. Requires Zn(2+) as cofactor.

The enzyme catalyses an S-(2-hydroxyacyl)glutathione + H2O = a 2-hydroxy carboxylate + glutathione + H(+). It functions in the pathway secondary metabolite metabolism; methylglyoxal degradation; (R)-lactate from methylglyoxal: step 2/2. Functionally, thiolesterase that catalyzes the hydrolysis of S-D-lactoyl-glutathione to form glutathione and D-lactic acid. The protein is Hydroxyacylglutathione hydrolase of Salmonella agona (strain SL483).